The following is a 690-amino-acid chain: Putative glycerophosphocholine phosphodiesterase GPCPD1 homolog 1 (690 aa).

One can recognise a CBM20 domain in the interval 1 to 122; sequence MDQDYKAHFK…RKNITDQFGS (122 aa). A GP-PDE domain is found at 344–654; it reads MLQIGHRGMG…DRIGEDEVLK (311 aa). Residues 670–690 are disordered; the sequence is ARSQHNSRSPSMSRRCMSTVE. The span at 676–690 shows a compositional bias: low complexity; the sequence is SRSPSMSRRCMSTVE.

Belongs to the glycerophosphoryl diester phosphodiesterase family.

This is Putative glycerophosphocholine phosphodiesterase GPCPD1 homolog 1 from Caenorhabditis elegans.